Consider the following 236-residue polypeptide: Dolichol-phosphate mannosyltransferase (236 aa).

Pro9, Tyr11, Glu13, Ile40, Asp42, Asp95, Ala96, Asp97, Arg124, Val160, Arg211, and Lys217 together coordinate GDP-alpha-D-mannose. Residue Asp97 coordinates Mg(2+). Residue Asp97 participates in Mn(2+) binding.

This sequence belongs to the glycosyltransferase 2 family. In terms of assembly, component of the dolichol-phosphate mannose (DPM) synthase complex composed of dpm1, dpm2 and dpm3. Mg(2+) serves as cofactor. Requires Mn(2+) as cofactor. The cofactor is Ca(2+).

It is found in the endoplasmic reticulum. It carries out the reaction a di-trans,poly-cis-dolichyl phosphate + GDP-alpha-D-mannose = a di-trans,poly-cis-dolichyl beta-D-mannosyl phosphate + GDP. The protein operates within protein modification; protein glycosylation. Functionally, transfers mannose from GDP-mannose to dolichol monophosphate to form dolichol phosphate mannose (Dol-P-Man) which is the mannosyl donor in pathways leading to N-glycosylation, glycosyl phosphatidylinositol membrane anchoring, and O-mannosylation of proteins. This is Dolichol-phosphate mannosyltransferase from Schizosaccharomyces pombe (strain 972 / ATCC 24843) (Fission yeast).